Consider the following 465-residue polypeptide: Tyrosine 3-monooxygenase (465 aa).

3 residues coordinate Fe cation: His294, His299, and Glu339.

The protein belongs to the biopterin-dependent aromatic amino acid hydroxylase family. Fe(2+) is required as a cofactor.

Its subcellular location is the cytoplasm. The protein localises to the perinuclear region. It carries out the reaction (6R)-L-erythro-5,6,7,8-tetrahydrobiopterin + L-tyrosine + O2 = (4aS,6R)-4a-hydroxy-L-erythro-5,6,7,8-tetrahydrobiopterin + L-dopa. It participates in catecholamine biosynthesis; dopamine biosynthesis; dopamine from L-tyrosine: step 1/2. This chain is Tyrosine 3-monooxygenase (TH), found in Schistosoma mansoni (Blood fluke).